The primary structure comprises 57 residues: Large ribosomal subunit protein bL32 (57 aa).

Residues 1–20 (MAVPKRRMSRSNTRSRRAQW) are compositionally biased toward basic residues. A disordered region spans residues 1-22 (MAVPKRRMSRSNTRSRRAQWKA).

It belongs to the bacterial ribosomal protein bL32 family.

This chain is Large ribosomal subunit protein bL32, found in Mycobacterium sp. (strain JLS).